The primary structure comprises 254 residues: Imidazole glycerol phosphate synthase subunit HisF (254 aa).

Residues D11 and D130 contribute to the active site.

Belongs to the HisA/HisF family. Heterodimer of HisH and HisF.

It is found in the cytoplasm. It catalyses the reaction 5-[(5-phospho-1-deoxy-D-ribulos-1-ylimino)methylamino]-1-(5-phospho-beta-D-ribosyl)imidazole-4-carboxamide + L-glutamine = D-erythro-1-(imidazol-4-yl)glycerol 3-phosphate + 5-amino-1-(5-phospho-beta-D-ribosyl)imidazole-4-carboxamide + L-glutamate + H(+). The protein operates within amino-acid biosynthesis; L-histidine biosynthesis; L-histidine from 5-phospho-alpha-D-ribose 1-diphosphate: step 5/9. Functionally, IGPS catalyzes the conversion of PRFAR and glutamine to IGP, AICAR and glutamate. The HisF subunit catalyzes the cyclization activity that produces IGP and AICAR from PRFAR using the ammonia provided by the HisH subunit. The protein is Imidazole glycerol phosphate synthase subunit HisF of Chromobacterium violaceum (strain ATCC 12472 / DSM 30191 / JCM 1249 / CCUG 213 / NBRC 12614 / NCIMB 9131 / NCTC 9757 / MK).